The primary structure comprises 338 residues: Aspartate carbamoyltransferase catalytic subunit (338 aa).

Carbamoyl phosphate is bound by residues arginine 59 and threonine 60. L-aspartate is bound at residue lysine 87. Arginine 109, histidine 142, and glutamine 145 together coordinate carbamoyl phosphate. 2 residues coordinate L-aspartate: arginine 182 and arginine 253. Positions 294 and 295 each coordinate carbamoyl phosphate.

It belongs to the aspartate/ornithine carbamoyltransferase superfamily. ATCase family. As to quaternary structure, heterododecamer (2C3:3R2) of six catalytic PyrB chains organized as two trimers (C3), and six regulatory PyrI chains organized as three dimers (R2).

The enzyme catalyses carbamoyl phosphate + L-aspartate = N-carbamoyl-L-aspartate + phosphate + H(+). The protein operates within pyrimidine metabolism; UMP biosynthesis via de novo pathway; (S)-dihydroorotate from bicarbonate: step 2/3. Functionally, catalyzes the condensation of carbamoyl phosphate and aspartate to form carbamoyl aspartate and inorganic phosphate, the committed step in the de novo pyrimidine nucleotide biosynthesis pathway. This is Aspartate carbamoyltransferase catalytic subunit from Prochlorococcus marinus (strain SARG / CCMP1375 / SS120).